The sequence spans 310 residues: Pirin-like protein At1g50590 (310 aa).

It belongs to the pirin family.

It is found in the nucleus. This is Pirin-like protein At1g50590 from Arabidopsis thaliana (Mouse-ear cress).